A 156-amino-acid chain; its full sequence is Putative pre-16S rRNA nuclease (156 aa).

Belongs to the YqgF nuclease family.

Its subcellular location is the cytoplasm. In terms of biological role, could be a nuclease involved in processing of the 5'-end of pre-16S rRNA. This is Putative pre-16S rRNA nuclease from Aromatoleum aromaticum (strain DSM 19018 / LMG 30748 / EbN1) (Azoarcus sp. (strain EbN1)).